Reading from the N-terminus, the 180-residue chain is Cytokinin-beta-glucosidase 2 (180 aa).

Hydrolyzes cytokinin glucosides thus liberating free cytokinins. The polypeptide is Cytokinin-beta-glucosidase 2 (ROLC2) (Panax ginseng (Korean ginseng)).